Here is a 147-residue protein sequence, read N- to C-terminus: Ubiquitin-conjugating enzyme E2 4 (147 aa).

Residues 1-147 (MSLKRINKEL…AKEWTKKYAV (147 aa)) form the UBC core domain. Cys-85 (glycyl thioester intermediate) is an active-site residue.

This sequence belongs to the ubiquitin-conjugating enzyme family.

It catalyses the reaction S-ubiquitinyl-[E1 ubiquitin-activating enzyme]-L-cysteine + [E2 ubiquitin-conjugating enzyme]-L-cysteine = [E1 ubiquitin-activating enzyme]-L-cysteine + S-ubiquitinyl-[E2 ubiquitin-conjugating enzyme]-L-cysteine.. It participates in protein modification; protein ubiquitination. In terms of biological role, E2 ubiquitin-conjugating enzyme that catalyzes the covalent attachment of ubiquitin to other proteins. Mediates the selective degradation of short-lived and abnormal proteins. Mediates ubiquitination of PEX5. In Candida albicans (Yeast), this protein is Ubiquitin-conjugating enzyme E2 4 (UBC4).